The sequence spans 553 residues: Thermosome subunit beta (553 aa).

The disordered stretch occupies residues 534 to 553 (KKSEGKTGEKKESEKGKEED).

The protein belongs to the TCP-1 chaperonin family. In terms of assembly, forms a Heterooligomeric complex of two stacked eight-membered rings.

Molecular chaperone; binds unfolded polypeptides in vitro, and has a weak ATPase activity. This is Thermosome subunit beta (thsB) from Sulfolobus acidocaldarius (strain ATCC 33909 / DSM 639 / JCM 8929 / NBRC 15157 / NCIMB 11770).